The following is a 547-amino-acid chain: Sodium-coupled neutral amino acid transporter 4 (547 aa).

The disordered stretch occupies residues 1 to 26 (MDPMELRNVNIEPDDESSSGESVPDS). The Extracellular portion of the chain corresponds to 1–104 (MDPMELRNVN…GLSYAMANTG (104 aa)). Ser-49 carries the post-translational modification Phosphoserine. Residues 105 to 125 (IILFIIMLLAVAILSLYSVHL) traverse the membrane as a helical segment. At 126–151 (LLKTAKEGGSLIYEKLGEKAFGWPGK) the chain is on the cytoplasmic side. Residues 152–172 (IGAFISITMQNIGAMSSYLFI) form a helical membrane-spanning segment. Topologically, residues 173–195 (IKYELPEVIRAFMGLEENTGEWY) are extracellular. The helical transmembrane segment at 196–216 (PNGNYLIVFVSLGIILPLSLL) threads the bilayer. The Cytoplasmic segment spans residues 217–220 (KNLG). Residues 221–241 (YLGYTSGFSLTCMVFFVSVVI) traverse the membrane as a helical segment. Topologically, residues 242 to 332 (YKKFQIPCPL…PKYFVFNSRT (91 aa)) are extracellular. The cysteines at positions 249 and 321 are disulfide-linked. N-linked (GlcNAc...) asparagine glycans are attached at residues Asn-260, Asn-264, and Asn-276. A helical transmembrane segment spans residues 333-353 (AYAIPILAFAFVCHPEVLPIY). The Cytoplasmic portion of the chain corresponds to 354–369 (SELKDRSRRKMQTVSN). A helical membrane pass occupies residues 370-390 (ISITGMLVMYLLAALFGYLTF). The Extracellular segment spans residues 391–411 (YGEVEDELLHAYSKVYTFDIP). The helical transmembrane segment at 412 to 432 (LLMVRLAVLVAVTLTVPIVLF) threads the bilayer. At 433 to 453 (PIRTSVTTLLFPKRPFSWIRH) the chain is on the cytoplasmic side. The chain crosses the membrane as a helical span at residues 454–474 (FLIAAVLIALNNVLVILVPTI). The Extracellular portion of the chain corresponds to 475–476 (KY). A helical transmembrane segment spans residues 477-497 (IFGFIGASSATMLIFILPAVF). Residues 498 to 514 (YLKLVKKESFRSPQKVG) are Cytoplasmic-facing. The chain crosses the membrane as a helical span at residues 515 to 535 (ALIFLVVGIIFMIGSMALIII). At 536-547 (DWIYDPPNSKHH) the chain is on the extracellular side.

This sequence belongs to the amino acid/polyamine transporter 2 family. The disulfide bond plays an important role in substrate transport, but has no effect on trafficking to the cell surface.

The protein localises to the cell membrane. Its subcellular location is the cell projection. It localises to the microvillus membrane. The catalysed reaction is L-methionine(in) + Na(+)(in) = L-methionine(out) + Na(+)(out). The enzyme catalyses L-asparagine(in) + Na(+)(in) = L-asparagine(out) + Na(+)(out). It catalyses the reaction L-threonine(in) + Na(+)(in) = L-threonine(out) + Na(+)(out). It carries out the reaction L-serine(in) + Na(+)(in) = L-serine(out) + Na(+)(out). The catalysed reaction is glycine(in) + Na(+)(in) = glycine(out) + Na(+)(out). The enzyme catalyses L-alanine(in) + Na(+)(in) = L-alanine(out) + Na(+)(out). It catalyses the reaction L-glutamine(in) + Na(+)(in) = L-glutamine(out) + Na(+)(out). It carries out the reaction L-histidine(in) + Na(+)(in) = L-histidine(out) + Na(+)(out). The catalysed reaction is L-cysteine(in) + Na(+)(in) = L-cysteine(out) + Na(+)(out). The enzyme catalyses L-proline(in) + Na(+)(in) = L-proline(out) + Na(+)(out). Symporter that cotransports neutral amino acids and sodium ions from the extraccellular to the intracellular side of the cell membrane. The transport is electrogenic, pH dependent and partially tolerates substitution of Na(+) by Li(+). Preferentially transports smaller amino acids, such as glycine, L-alanine, L-serine, L-asparagine and L-threonine, followed by L-cysteine, L-histidine, L-proline and L-glutamine and L-methionine. In Pongo abelii (Sumatran orangutan), this protein is Sodium-coupled neutral amino acid transporter 4.